Here is a 722-residue protein sequence, read N- to C-terminus: Lysophospholipid acyltransferase 6 (722 aa).

The next 5 helical transmembrane spans lie at 25-45 (MVGLSVDLVNFLICQISALFL), 62-84 (LRHTFALSIGLAFGYFCFGQQAI), 104-123 (IVQRAVLLVAMSYLLCVHLM), 180-200 (ALEYFSYVWHFQSILAGPLVF), and 243-263 (KVVGSLVCAFIFMKFVKIYPV). Catalysis depends on residues N349 and H381. Helical transmembrane passes span 378–398 (AVWHGFYPGYYLTFATGAVVV), 424–444 (ILTCLITRVVLGYATFPFVLL), and 452–472 (LYLRFYLCLHIISLVTIFILP). Composition is skewed to polar residues over residues 485–511 (NGNGNVRLSGSGNTKDAVTTSVESTAA) and 549–570 (VEQPTEQPNNVNLRSRPQQQQP). 2 disordered regions span residues 485–582 (NGNG…PTCA) and 650–687 (NGAISLDSSNGGGLRKRNISSVHDNGTDPGHATADLHP).

It belongs to the membrane-bound acyltransferase family.

The protein resides in the endoplasmic reticulum. It localises to the membrane. The catalysed reaction is a 1-acyl-sn-glycero-3-phospho-L-serine + an acyl-CoA = a 1,2-diacyl-sn-glycero-3-phospho-L-serine + CoA. It carries out the reaction 1-(9Z-octadecenoyl)-sn-glycero-3-phospho-L-serine + (9Z)-hexadecenoyl-CoA = 1-(9Z-octadecenoyl)-2-(9Z-hexadecenoyl)-sn-glycero-3-phospho-L-serine + CoA. It catalyses the reaction 1-(9Z-octadecenoyl)-sn-glycero-3-phospho-L-serine + (9Z)-octadecenoyl-CoA = 1,2-di-(9Z)-octadecenoyl-sn-glycero-3-phospho-L-serine + CoA. The enzyme catalyses a 1-acyl-sn-glycero-3-phosphocholine + an acyl-CoA = a 1,2-diacyl-sn-glycero-3-phosphocholine + CoA. The catalysed reaction is 1-hexadecanoyl-sn-glycero-3-phosphocholine + (9Z)-octadecenoyl-CoA = 1-hexadecanoyl-2-(9Z-octadecenoyl)-sn-glycero-3-phosphocholine + CoA. It carries out the reaction (9Z)-hexadecenoyl-CoA + 1-hexadecanoyl-sn-glycero-3-phosphocholine = 1-hexadecanoyl-2-(9Z-hexadecenoyl)-sn-glycero-3-phosphocholine + CoA. It catalyses the reaction a 1-acyl-sn-glycero-3-phosphoethanolamine + an acyl-CoA = a 1,2-diacyl-sn-glycero-3-phosphoethanolamine + CoA. The enzyme catalyses 1-hexadecanoyl-sn-glycero-3-phosphoethanolamine + (9Z)-octadecenoyl-CoA = 1-hexadecanoyl-2-(9Z-octadecenoyl)-sn-glycero-3-phosphoethanolamine + CoA. The catalysed reaction is 1-hexadecanoyl-sn-glycero-3-phosphoethanolamine + (9Z,12Z)-octadecadienoyl-CoA = 1-hexadecanoyl-2-(9Z,12Z-octadecadienoyl)-sn-glycero-3-phosphoethanolamine + CoA. It carries out the reaction 1-hexadecanoyl-sn-glycero-3-phosphoethanolamine + (9Z)-hexadecenoyl-CoA = 1-hexadecanoyl-2-(9Z)-hexadecenoyl-sn-glycero-3-phosphoethanolamine + CoA. It catalyses the reaction 1-(9Z-octadecenoyl)-sn-glycero-3-phospho-(1'-sn-glycerol) + (9Z)-octadecenoyl-CoA = 1,2-di-(9Z-octadecenoyl)-sn-glycero-3-phospho-(1'-sn-glycerol) + CoA. Its pathway is lipid metabolism; phospholipid metabolism. In terms of biological role, acyltransferase with broad-specificity, that mediates the acylation of lysophospholipids to produce phospholipids (glycerophospholipids). Converts lysophosphatidylserine (1-acyl-2-hydroxy-sn-glycero-3-phospho-L-serine or LPS) to phosphatidylserine (1,2-diacyl-sn-glycero-3-phospho-L-serine or PS) (LPSAT activity), lysophosphatidylcholine (1-acyl-sn-glycero-3-phosphocholine or LPC) to phosphatidylcholine (1,2-diacyl-sn-glycero-3-phosphocholine or PC) (LPCAT activity), also lysophosphatidylethanolamine (1-acyl-sn-glycero-3-phosphochethanolamine or LPE) to phosphatidylchethanolamine (LPEAT activity) and lysophosphatidylglycerol (1-acyl-2-hydroxy-sn-glycero-3-phospho-(1'-sn-glycerol) or LPG) to phosphatidylglycerol (1,2-diacyl-sn-glycero-3-phospho-(1'-sn-glycerol) or PG) (LPGAT activity). Has a preference for unsaturated fatty acids of at least 16 carbons such as oleoyl-CoA ((9Z)-octadecenoyl-CoA) and palmitoleoyl-CoA ((9Z)-hexadecenoyl-CoA). Glycerophospholipids are important structural and functional components of cellular membrane, acyl-chain remodeling regulates the molecular species distribution of glycerophospholipids which can affect membrane fluidity and curvature. Essential for fertility and viability together with Nessy protein (Nes). The chain is Lysophospholipid acyltransferase 6 from Drosophila melanogaster (Fruit fly).